Consider the following 609-residue polypeptide: Actin-interacting protein 1-2 (609 aa).

WD repeat units lie at residues 2–42, 54–93, 97–141, 142–182, 185–224, 230–269, 277–318, 322–362, 445–484, 489–528, 532–571, and 576–609; these read ELSE…VTLD, EHAY…VLKN, VLAG…GEFD, GHSR…FKLS, EHSN…ILGE, GHKG…SGSL, GSSG…KSPF, GHMK…CGKL, NLGF…LTEE, RHRG…MKLK, YHSA…SSRM, and AHLG…FTPQ.

Expressed in leaves, stems, flower buds and flowers.

Binds actin. Enhances the F-actin depolymerization activity of actin-depolymerizing factor (ADF) proteins. This is Actin-interacting protein 1-2 from Arabidopsis thaliana (Mouse-ear cress).